The chain runs to 255 residues: Aliphatic sulfonates import ATP-binding protein SsuB (255 aa).

The 227-residue stretch at 5 to 231 (IRVNEKAFGK…PRSRTSPVFQ (227 aa)) folds into the ABC transporter domain. Residue 39 to 46 (GPSGCGKS) coordinates ATP.

The protein belongs to the ABC transporter superfamily. Aliphatic sulfonates importer (TC 3.A.1.17.2) family. In terms of assembly, the complex is composed of two ATP-binding proteins (SsuB), two transmembrane proteins (SsuC) and a solute-binding protein (SsuA).

It localises to the cell membrane. The catalysed reaction is ATP + H2O + aliphatic sulfonate-[sulfonate-binding protein]Side 1 = ADP + phosphate + aliphatic sulfonateSide 2 + [sulfonate-binding protein]Side 1.. Part of the ABC transporter complex SsuABC involved in aliphatic sulfonates import. Responsible for energy coupling to the transport system. This Bacillus licheniformis (strain ATCC 14580 / DSM 13 / JCM 2505 / CCUG 7422 / NBRC 12200 / NCIMB 9375 / NCTC 10341 / NRRL NRS-1264 / Gibson 46) protein is Aliphatic sulfonates import ATP-binding protein SsuB.